The following is a 278-amino-acid chain: Urease accessory protein UreD (278 aa).

The protein belongs to the UreD family. As to quaternary structure, ureD, UreF and UreG form a complex that acts as a GTP-hydrolysis-dependent molecular chaperone, activating the urease apoprotein by helping to assemble the nickel containing metallocenter of UreC. The UreE protein probably delivers the nickel.

Its subcellular location is the cytoplasm. Its function is as follows. Required for maturation of urease via the functional incorporation of the urease nickel metallocenter. The protein is Urease accessory protein UreD of Staphylococcus aureus (strain bovine RF122 / ET3-1).